The sequence spans 74 residues: Molt-inhibiting hormone (74 aa).

A Pyrrolidone carboxylic acid modification is found at Q1. 3 disulfide bridges follow: C7/C43, C23/C39, and C26/C52. Position 72 is a valine amide (V72).

The protein resides in the secreted. In terms of biological role, inhibits Y-organs where molting hormone (ecdysteroid) is secreted. A molting cycle is initiated when MIH secretion diminishes or stops. This is Molt-inhibiting hormone from Procambarus bouvieri (Mexican crayfish).